Reading from the N-terminus, the 148-residue chain is Large ribosomal subunit protein uL15 (148 aa).

The interval 1–47 (MAFSLENLRPAPGSRPKSKRVGRGSSSGKGKTSSRGHKGQGRGTGKV) is disordered.

This sequence belongs to the universal ribosomal protein uL15 family. Part of the 50S ribosomal subunit.

Binds to the 23S rRNA. This is Large ribosomal subunit protein uL15 from Kosmotoga olearia (strain ATCC BAA-1733 / DSM 21960 / TBF 19.5.1).